The primary structure comprises 214 residues: EEF1A lysine methyltransferase 1 (214 aa).

An N-acetylserine modification is found at S2. At S2 the chain carries Phosphoserine.

Belongs to the class I-like SAM-binding methyltransferase superfamily. EFM5 family.

It localises to the cytoplasm. The catalysed reaction is L-lysyl-[protein] + 3 S-adenosyl-L-methionine = N(6),N(6),N(6)-trimethyl-L-lysyl-[protein] + 3 S-adenosyl-L-homocysteine + 3 H(+). Functionally, protein-lysine methyltransferase that selectively catalyzes the trimethylation of EEF1A at 'Lys-79'. In Mus musculus (Mouse), this protein is EEF1A lysine methyltransferase 1.